The chain runs to 144 residues: Small ribosomal subunit protein uS19 (144 aa).

The protein belongs to the universal ribosomal protein uS19 family.

Its function is as follows. Protein S19 forms a complex with S13 that binds strongly to the 16S ribosomal RNA. This Aeropyrum pernix (strain ATCC 700893 / DSM 11879 / JCM 9820 / NBRC 100138 / K1) protein is Small ribosomal subunit protein uS19 (rps19).